The chain runs to 232 residues: Large ribosomal subunit protein uL1 (232 aa).

The protein belongs to the universal ribosomal protein uL1 family. Part of the 50S ribosomal subunit.

Its function is as follows. Binds directly to 23S rRNA. The L1 stalk is quite mobile in the ribosome, and is involved in E site tRNA release. Functionally, protein L1 is also a translational repressor protein, it controls the translation of the L11 operon by binding to its mRNA. The chain is Large ribosomal subunit protein uL1 from Xylella fastidiosa (strain 9a5c).